Consider the following 364-residue polypeptide: WAT1-related protein At3g30340 (364 aa).

10 helical membrane passes run 9-29 (WKAVLMMSMINIGLSVVNVMF), 41-61 (VATTYRLAVGTLFLIPFAIFL), 76-96 (SLFFSALLGTSLVQYFFLIGL), 102-122 (TFSLAFSNMVPSVTFALALVF), 138-158 (LLGTMICICGALVLTLYKGTA), 183-203 (WAMGSIMLVISIIIWSSWFIV), 215-235 (YTSTTILSFFGVIQSALLSLI), 251-271 (VLALLYSGIVGSGLCYVGMSW), 277-297 (GAVFTSSFIPLIQVFAAIFSF), and 304-324 (IYCGSVIGSMVIIVGLYILLW). EamA domains are found at residues 26–152 (NVMF…LVLT) and 195–323 (IIWS…YILL).

It belongs to the drug/metabolite transporter (DMT) superfamily. Plant drug/metabolite exporter (P-DME) (TC 2.A.7.4) family.

The protein resides in the membrane. This is WAT1-related protein At3g30340 from Arabidopsis thaliana (Mouse-ear cress).